A 385-amino-acid chain; its full sequence is S-adenosylmethionine synthase (385 aa).

ATP is bound at residue His16. Asp18 provides a ligand contact to Mg(2+). Glu44 serves as a coordination point for K(+). L-methionine contacts are provided by Glu57 and Gln100. The tract at residues 100–110 is flexible loop; that stretch reads QSPDINQGVDK. ATP is bound by residues 165 to 167, 231 to 232, Asp240, 246 to 247, Ala263, and Lys267; these read DAK, RF, and RK. Residue Asp240 coordinates L-methionine. Lys271 contributes to the L-methionine binding site.

Belongs to the AdoMet synthase family. In terms of assembly, homotetramer; dimer of dimers. Mg(2+) is required as a cofactor. The cofactor is K(+).

It is found in the cytoplasm. It catalyses the reaction L-methionine + ATP + H2O = S-adenosyl-L-methionine + phosphate + diphosphate. It participates in amino-acid biosynthesis; S-adenosyl-L-methionine biosynthesis; S-adenosyl-L-methionine from L-methionine: step 1/1. Functionally, catalyzes the formation of S-adenosylmethionine (AdoMet) from methionine and ATP. The overall synthetic reaction is composed of two sequential steps, AdoMet formation and the subsequent tripolyphosphate hydrolysis which occurs prior to release of AdoMet from the enzyme. In Vibrio cholerae serotype O1 (strain ATCC 39541 / Classical Ogawa 395 / O395), this protein is S-adenosylmethionine synthase.